Here is a 301-residue protein sequence, read N- to C-terminus: Protoheme IX farnesyltransferase (301 aa).

The next 9 membrane-spanning stretches (helical) occupy residues 34–54 (LVVF…HPLI), 55–75 (GLVS…FNMW), 102–121 (AWEC…AIAV), 125–144 (SALL…TMLL), 152–172 (IVIG…SVSG), 181–201 (LFAI…LLTL), 222–242 (SHIL…GLFV), 247–267 (LYEI…IAVF), and 280–300 (GLFK…IACV).

This sequence belongs to the UbiA prenyltransferase family. Protoheme IX farnesyltransferase subfamily.

Its subcellular location is the cell inner membrane. It catalyses the reaction heme b + (2E,6E)-farnesyl diphosphate + H2O = Fe(II)-heme o + diphosphate. Its pathway is porphyrin-containing compound metabolism; heme O biosynthesis; heme O from protoheme: step 1/1. Converts heme B (protoheme IX) to heme O by substitution of the vinyl group on carbon 2 of heme B porphyrin ring with a hydroxyethyl farnesyl side group. This Anaplasma marginale (strain Florida) protein is Protoheme IX farnesyltransferase.